Here is a 191-residue protein sequence, read N- to C-terminus: UPF0312 protein Shewana3_1179 (191 aa).

A signal peptide spans 1 to 22 (MKKQLLAALIGGSLLAPMAASA).

The protein belongs to the UPF0312 family. Type 1 subfamily.

Its subcellular location is the periplasm. In Shewanella sp. (strain ANA-3), this protein is UPF0312 protein Shewana3_1179.